We begin with the raw amino-acid sequence, 315 residues long: Porphobilinogen deaminase (315 aa).

Cysteine 234 carries the post-translational modification S-(dipyrrolylmethanemethyl)cysteine.

It belongs to the HMBS family. In terms of assembly, monomer. The cofactor is dipyrromethane.

The catalysed reaction is 4 porphobilinogen + H2O = hydroxymethylbilane + 4 NH4(+). The protein operates within porphyrin-containing compound metabolism; protoporphyrin-IX biosynthesis; coproporphyrinogen-III from 5-aminolevulinate: step 2/4. Its function is as follows. Tetrapolymerization of the monopyrrole PBG into the hydroxymethylbilane pre-uroporphyrinogen in several discrete steps. In Mycolicibacterium paratuberculosis (strain ATCC BAA-968 / K-10) (Mycobacterium paratuberculosis), this protein is Porphobilinogen deaminase.